The following is a 232-amino-acid chain: Small ribosomal subunit protein uS3 (232 aa).

One can recognise a KH type-2 domain in the interval 39 to 107; it reads VRQFLIKELA…PAQINIAEVR (69 aa).

It belongs to the universal ribosomal protein uS3 family. In terms of assembly, part of the 30S ribosomal subunit. Forms a tight complex with proteins S10 and S14.

In terms of biological role, binds the lower part of the 30S subunit head. Binds mRNA in the 70S ribosome, positioning it for translation. This Serratia proteamaculans (strain 568) protein is Small ribosomal subunit protein uS3.